The primary structure comprises 241 residues: Keratin-associated protein 5-5 (241 aa).

Repeat copies occupy residues 35–38, 41–44, 47–50, 105–108, 115–118, 133–136, 143–146, 161–164, 171–174, 181–184, 191–194, 201–204, 211–214, 221–224, and 231–234. The segment at 35–234 is 15 X 4 AA repeats of C-C-X-P; that stretch reads CCKPVCCCKP…CCCQSSCCAP (200 aa).

Belongs to the KRTAP type 5 family. In terms of assembly, interacts with hair keratins.

In the hair cortex, hair keratin intermediate filaments are embedded in an interfilamentous matrix, consisting of hair keratin-associated protein (KRTAP), which are essential for the formation of a rigid and resistant hair shaft through their extensive disulfide bond cross-linking with abundant cysteine residues of hair keratins. The matrix proteins include the high-sulfur and high-glycine-tyrosine keratins. The chain is Keratin-associated protein 5-5 from Mus musculus (Mouse).